Here is a 240-residue protein sequence, read N- to C-terminus: Aldehyde dehydrogenase, cytosolic 2 (240 aa).

Active-site residues include E8 and C42. Residues K106, K149, K151, and K174 each carry the N6-acetyllysine modification.

Belongs to the aldehyde dehydrogenase family. In terms of assembly, homotetramer. As to expression, non-lens specific, predominant form expressed in the liver.

The protein localises to the cytoplasm. The enzyme catalyses an aldehyde + NAD(+) + H2O = a carboxylate + NADH + 2 H(+). Its pathway is alcohol metabolism; ethanol degradation; acetate from ethanol: step 2/2. Elephant shrews, in contrast to other mammals, possess both a lens- and a non-lens specific class-1 aldehyde dehydrogenase. Can convert/oxidize retinaldehyde to retinoic acid. The sequence is that of Aldehyde dehydrogenase, cytosolic 2 from Macroscelides proboscideus (Short-eared elephant shrew).